Reading from the N-terminus, the 160-residue chain is Major pollen allergen Bet v 1-M/N (160 aa).

Brassinolide-binding residues include Lys55, Tyr82, Tyr84, and Asn101.

Belongs to the BetVI family.

The protein localises to the cytoplasm. Its function is as follows. May be a general steroid carrier protein. The chain is Major pollen allergen Bet v 1-M/N (BETV1M) from Betula pendula (European white birch).